The following is a 261-amino-acid chain: [LysW]-aminoadipate/[LysW]-glutamate kinase (261 aa).

Substrate is bound by residues 35 to 36 (GG), arginine 62, and asparagine 166.

It belongs to the acetylglutamate kinase family. LysZ subfamily.

Its subcellular location is the cytoplasm. It catalyses the reaction [amino-group carrier protein]-C-terminal-N-(1,4-dicarboxybutan-1-yl)-L-glutamine + ATP = [amino-group carrier protein]-C-terminal-N-(1-carboxy-5-phosphooxy-5-oxopentan-1-yl)-L-glutamine + ADP. It carries out the reaction [amino-group carrier protein]-C-terminal-gamma-(L-glutamyl)-L-glutamate + ATP = [amino-group carrier protein]-C-terminal-gamma-(5-phospho-L-glutamyl)-L-glutamate + ADP. It participates in amino-acid biosynthesis; L-lysine biosynthesis via AAA pathway; L-lysine from L-alpha-aminoadipate (Thermus route): step 2/5. Its pathway is amino-acid biosynthesis; L-arginine biosynthesis. Its function is as follows. Involved in both the arginine and lysine biosynthetic pathways. Phosphorylates the LysW-bound precursors glutamate (for arginine biosynthesis), respectively alpha-aminoadipate (for lysine biosynthesis). This chain is [LysW]-aminoadipate/[LysW]-glutamate kinase, found in Sulfolobus acidocaldarius (strain ATCC 33909 / DSM 639 / JCM 8929 / NBRC 15157 / NCIMB 11770).